A 783-amino-acid chain; its full sequence is Cation/H(+) antiporter 10 (783 aa).

12 helical membrane passes run 31–51 (VVFGYSLPLLEIQIILIFFCI), 61–81 (IGISQIASYMIAGIVLGPQLF), 100–120 (IAALRCISVFGTLMFTFLMTV), 135–155 (VVIGIVSFFAPLFGLGFQNFF), 175–195 (AIVITQSSILLPSTTYILLEL), 206–226 (ALSACVINDILGIFSMIVASI), 244–264 (AVIIFFLVVFLVFKPMVQWVI), 276–295 (MYIHAVIITALASAAYFVFF), 300–322 (ILGPLMIGIIIPEGPPLGSALEA), 356–376 (IFFNIFLTFLILVIKLVACLA), 389–409 (LAVSFILSYKSFADFVLYEAV), and 418–438 (ATYSFLILYSLLNAGIVPTVL).

It belongs to the monovalent cation:proton antiporter 2 (CPA2) transporter (TC 2.A.37) family. CHX (TC 2.A.37.4) subfamily. As to expression, specifically expressed in pollen.

The protein localises to the membrane. In terms of biological role, may operate as a cation/H(+) antiporter. This Arabidopsis thaliana (Mouse-ear cress) protein is Cation/H(+) antiporter 10 (CHX10).